Consider the following 444-residue polypeptide: N-succinylarginine dihydrolase (444 aa).

Substrate-binding positions include Ala19–Ser28, Asn110, and His137–Arg138. The active site involves Glu174. Substrate is bound at residue Arg214. The active site involves His250. 2 residues coordinate substrate: Asp252 and Asn362. The active-site Nucleophile is Cys368.

Belongs to the succinylarginine dihydrolase family. Homodimer.

The catalysed reaction is N(2)-succinyl-L-arginine + 2 H2O + 2 H(+) = N(2)-succinyl-L-ornithine + 2 NH4(+) + CO2. Its pathway is amino-acid degradation; L-arginine degradation via AST pathway; L-glutamate and succinate from L-arginine: step 2/5. Its function is as follows. Catalyzes the hydrolysis of N(2)-succinylarginine into N(2)-succinylornithine, ammonia and CO(2). The polypeptide is N-succinylarginine dihydrolase (Shewanella frigidimarina (strain NCIMB 400)).